The chain runs to 481 residues: Leukocyte immunoglobulin-like receptor subfamily A member 6 (481 aa).

The first 23 residues, 1–23 (MTPALTALLCLGLSLGPRTRVQA), serve as a signal peptide directing secretion. The Extracellular segment spans residues 24–447 (GPFPKPTLWA…SHAKDYTVEN (424 aa)). Cysteine 49 and cysteine 98 are joined by a disulfide. Over residues 59 to 70 (QLDKEGSPEPLD) the composition is skewed to basic and acidic residues. The segment at 59–78 (QLDKEGSPEPLDRNNPLEPK) is disordered. N-linked (GlcNAc...) asparagine glycosylation is present at asparagine 139. Intrachain disulfides connect cysteine 144–cysteine 196 and cysteine 245–cysteine 296. Ig-like C2-type domains are found at residues 225 to 314 (PSLL…DPLN) and 323 to 408 (DTVS…HLLS). N-linked (GlcNAc...) asparagine glycosylation is found at asparagine 301 and asparagine 340. A disulfide bridge connects residues cysteine 345 and cysteine 396. Residues 419–439 (SGHSGGSSLPPTGPPSTPASH) form a disordered region. The helical transmembrane segment at 448–468 (LIRMGMAGLVLVFLGILLFEA) threads the bilayer. The Cytoplasmic segment spans residues 469-481 (QHSQRNPQDAAGR).

It localises to the membrane. May act as receptor for class I MHC antigens. In Homo sapiens (Human), this protein is Leukocyte immunoglobulin-like receptor subfamily A member 6 (LILRA6).